Consider the following 237-residue polypeptide: Orotidine 5'-phosphate decarboxylase (237 aa).

Residues Asp-11, Lys-34, 61–70 (DLKLHDIPNT), Thr-124, Arg-186, Gln-195, Gly-215, and Arg-216 each bind substrate. Lys-63 acts as the Proton donor in catalysis.

The protein belongs to the OMP decarboxylase family. Type 1 subfamily. In terms of assembly, homodimer.

The enzyme catalyses orotidine 5'-phosphate + H(+) = UMP + CO2. Its pathway is pyrimidine metabolism; UMP biosynthesis via de novo pathway; UMP from orotate: step 2/2. Catalyzes the decarboxylation of orotidine 5'-monophosphate (OMP) to uridine 5'-monophosphate (UMP). The polypeptide is Orotidine 5'-phosphate decarboxylase (Lactococcus lactis subsp. lactis (strain IL1403) (Streptococcus lactis)).